A 205-amino-acid chain; its full sequence is Small ribosomal subunit protein uS4 (205 aa).

Over residues 1-16 (MSKRETTKYKIDRRMG) the composition is skewed to basic and acidic residues. The disordered stretch occupies residues 1-46 (MSKRETTKYKIDRRMGENIWGRPKSPVNRRDYGPGQHGQRRKGKLS). Positions 94-157 (SRLDAVVYRA…KQLVLVLESV (64 aa)) constitute an S4 RNA-binding domain.

This sequence belongs to the universal ribosomal protein uS4 family. Part of the 30S ribosomal subunit. Contacts protein S5. The interaction surface between S4 and S5 is involved in control of translational fidelity.

In terms of biological role, one of the primary rRNA binding proteins, it binds directly to 16S rRNA where it nucleates assembly of the body of the 30S subunit. Its function is as follows. With S5 and S12 plays an important role in translational accuracy. The sequence is that of Small ribosomal subunit protein uS4 from Bartonella tribocorum (strain CIP 105476 / IBS 506).